The sequence spans 62 residues: Photosystem II reaction center protein Z (62 aa).

2 helical membrane-spanning segments follow: residues Ser-8–Ala-28 and Phe-41–Ile-61.

The protein belongs to the PsbZ family. In terms of assembly, PSII is composed of 1 copy each of membrane proteins PsbA, PsbB, PsbC, PsbD, PsbE, PsbF, PsbH, PsbI, PsbJ, PsbK, PsbL, PsbM, PsbT, PsbY, PsbZ, Psb30/Ycf12, at least 3 peripheral proteins of the oxygen-evolving complex and a large number of cofactors. It forms dimeric complexes.

The protein resides in the plastid. The protein localises to the chloroplast thylakoid membrane. Functionally, may control the interaction of photosystem II (PSII) cores with the light-harvesting antenna, regulates electron flow through the 2 photosystem reaction centers. PSII is a light-driven water plastoquinone oxidoreductase, using light energy to abstract electrons from H(2)O, generating a proton gradient subsequently used for ATP formation. This Chaetosphaeridium globosum (Charophycean green alga) protein is Photosystem II reaction center protein Z.